We begin with the raw amino-acid sequence, 407 residues long: Chorismate synthase (407 aa).

NADP(+) is bound by residues R43 and R49. Residues 143 to 145 (RSS), 264 to 265 (QA), G308, 323 to 327 (KPIST), and R349 contribute to the FMN site.

It belongs to the chorismate synthase family. In terms of assembly, homotetramer. FMNH2 serves as cofactor.

The enzyme catalyses 5-O-(1-carboxyvinyl)-3-phosphoshikimate = chorismate + phosphate. It participates in metabolic intermediate biosynthesis; chorismate biosynthesis; chorismate from D-erythrose 4-phosphate and phosphoenolpyruvate: step 7/7. Functionally, catalyzes the anti-1,4-elimination of the C-3 phosphate and the C-6 proR hydrogen from 5-enolpyruvylshikimate-3-phosphate (EPSP) to yield chorismate, which is the branch point compound that serves as the starting substrate for the three terminal pathways of aromatic amino acid biosynthesis. This reaction introduces a second double bond into the aromatic ring system. The protein is Chorismate synthase of Corynebacterium efficiens (strain DSM 44549 / YS-314 / AJ 12310 / JCM 11189 / NBRC 100395).